We begin with the raw amino-acid sequence, 113 residues long: Death-associated protein-like 1.S (113 aa).

Residues 1 to 53 (MTKELKVQSSPQALKAGHLPAVKAGGMRVSKKQGNDENSAPEKNAKKTLQEKP) form a disordered region.

This sequence belongs to the DAP-DAPL1 family. Associates with ribosomes; preventing translation. Interacts with eiF5a (eif5a and eif5a2); preventing translation.

Functionally, ribosome-binding protein that promotes ribosome hibernation, a process during which ribosomes are stabilized in an inactive state and preserved from proteasomal degradation. Acts via its association with eiF5a (eif5a and eif5a2) at the polypeptide exit tunnel of the ribosome, preventing mRNA translation. Plays a key role in ribosome hibernation in the mature egg by preventing mRNA translation, leading to ribosome inactivation. Ribosomes, which are produced in large quantities during oogenesis, are stored and translationally repressed in the egg and early embryo. The sequence is that of Death-associated protein-like 1.S (dapl1.S) from Xenopus laevis (African clawed frog).